Here is a 1430-residue protein sequence, read N- to C-terminus: Gag-Pol polyprotein (1430 aa).

The N-myristoyl glycine; by host moiety is linked to residue Gly-2. An interaction with Gp41 region spans residues 7 to 31; that stretch reads ILSGGKLDEWEKIQLRPGGKKRYKM. The segment at 8 to 43 is interaction with host CALM1; the sequence is LSGGKLDEWEKIQLRPGGKKRYKMKHLIWASRELER. Residues 12–19 are interaction with host AP3D1; sequence KLDEWEKI. An interaction with membrane phosphatidylinositol 4,5-bisphosphate and RNA region spans residues 14 to 33; that stretch reads DEWEKIQLRPGGKKRYKMKH. Residues 16–22 carry the Nuclear export signal motif; sequence WEKIQLR. Positions 26 to 32 match the Nuclear localization signal motif; that stretch reads KKRYKMK. Positions 73–77 are interaction with membrane phosphatidylinositol 4,5-bisphosphate; that stretch reads EELKS. Phosphotyrosine; by host is present on Tyr-128. Positions 185-223 are interaction with human PPIA/CYPA and NUP153; it reads NTVGGHQAAMQMLKDTINEEAAEWDRLHPVHAGPAPPGQ. A dimerization/Multimerization of capsid protein p24 region spans residues 273 to 359; that stretch reads YSPVSILDIK…GGPSHKARVL (87 aa). CCHC-type zinc fingers lie at residues 384–401 and 405–422; these read VKCF…NCRA and KGCW…DCTE. Positions 438-475 are disordered; it reads EARKFPSEQTRANSPTSRELRVQRGDNPLSEAGAERRG. Polar residues predominate over residues 444 to 454; that stretch reads SEQTRANSPTS. Residues 483–487 form a dimerization of protease region; sequence PQITL. The Peptidase A2 domain maps to 502–571; that stretch reads KEALLDTGAD…TPVNIIGRNM (70 aa). Asp-507 serves as the catalytic For protease activity; shared with dimeric partner. Dimerization of protease stretches follow at residues 531-537 and 570-582; these read GIGGFIK and NMLT…LNFP. Residues 625–815 form the Reverse transcriptase domain; sequence EGKISKIGPE…PPFLWMGHEL (191 aa). Mg(2+)-binding residues include Asp-691, Asp-766, and Asp-767. The segment at 808-816 is RT 'primer grip'; sequence FLWMGHELH. The short motif at 980–996 is the Tryptophan repeat motif element; sequence WDTWWTDYWQATWIPEW. An RNase H type-1 domain is found at 1016–1139; that stretch reads IAGADTFYVD…VDKLVSAGVR (124 aa). Asp-1025, Glu-1060, Asp-1080, and Asp-1131 together coordinate Mg(2+). An Integrase-type zinc finger spans residues 1145 to 1186; sequence DGIDKAQEEHEKYHNNWRAMASDFNLPPIVAKEIVASCDKCQ. Residues His-1154, His-1158, Cys-1182, and Cys-1185 each coordinate Zn(2+). The Integrase catalytic domain maps to 1196–1346; the sequence is VDCSPGIWQL…SAGERIIDII (151 aa). Positions 1206, 1258, and 1294 each coordinate Mg(2+). The segment at residues 1365–1412 is a DNA-binding region (integrase-type); sequence FRVYYRDSRNPVWKGPAKLLWKGEGAVVIQDNSEIKIVPRRKAKIIRD.

As to quaternary structure, homotrimer; further assembles as hexamers of trimers. Interacts with gp41 (via C-terminus). Interacts with host CALM1; this interaction induces a conformational change in the Matrix protein, triggering exposure of the myristate group. Interacts with host AP3D1; this interaction allows the polyprotein trafficking to multivesicular bodies during virus assembly. Part of the pre-integration complex (PIC) which is composed of viral genome, matrix protein, Vpr and integrase. Homodimer; the homodimer further multimerizes as homohexamers or homopentamers. Interacts with human PPIA/CYPA; This interaction stabilizes the capsid. Interacts with human NUP153. Interacts with host PDZD8; this interaction stabilizes the capsid. Interacts with monkey TRIM5; this interaction destabilizes the capsid. In terms of assembly, homodimer, whose active site consists of two apposed aspartic acid residues. As to quaternary structure, heterodimer of p66 RT and p51 RT (RT p66/p51). Heterodimerization of RT is essential for DNA polymerase activity. The overall folding of the subdomains is similar in p66 RT and p51 RT but the spatial arrangements of the subdomains are dramatically different. Homotetramer; may further associate as a homohexadecamer. Part of the pre-integration complex (PIC) which is composed of viral genome, matrix protein, Vpr and integrase. Interacts with human SMARCB1/INI1 and human PSIP1/LEDGF isoform 1. Interacts with human KPNA3; this interaction might play a role in nuclear import of the pre-integration complex. Interacts with human NUP153; this interaction might play a role in nuclear import of the pre-integration complex. Requires Mg(2+) as cofactor. In terms of processing, specific enzymatic cleavages by the viral protease yield mature proteins. The protease is released by autocatalytic cleavage. The polyprotein is cleaved during and after budding, this process is termed maturation. Proteolytic cleavage of p66 RT removes the RNase H domain to yield the p51 RT subunit. Nucleocapsid protein p7 might be further cleaved after virus entry. Tyrosine phosphorylated presumably in the virion by a host kinase. Phosphorylation is apparently not a major regulator of membrane association. Post-translationally, phosphorylated possibly by host MAPK1; this phosphorylation is necessary for Pin1-mediated virion uncoating. In terms of processing, methylated by host PRMT6, impairing its function by reducing RNA annealing and the initiation of reverse transcription.

It localises to the host cell membrane. It is found in the host endosome. The protein localises to the host multivesicular body. Its subcellular location is the virion membrane. The protein resides in the host nucleus. It localises to the host cytoplasm. It is found in the virion. The enzyme catalyses Specific for a P1 residue that is hydrophobic, and P1' variable, but often Pro.. The catalysed reaction is Endohydrolysis of RNA in RNA/DNA hybrids. Three different cleavage modes: 1. sequence-specific internal cleavage of RNA. Human immunodeficiency virus type 1 and Moloney murine leukemia virus enzymes prefer to cleave the RNA strand one nucleotide away from the RNA-DNA junction. 2. RNA 5'-end directed cleavage 13-19 nucleotides from the RNA end. 3. DNA 3'-end directed cleavage 15-20 nucleotides away from the primer terminus.. It carries out the reaction 3'-end directed exonucleolytic cleavage of viral RNA-DNA hybrid.. It catalyses the reaction DNA(n) + a 2'-deoxyribonucleoside 5'-triphosphate = DNA(n+1) + diphosphate. Protease: The viral protease is inhibited by many synthetic protease inhibitors (PIs), such as amprenavir, atazanavir, indinavir, loprinavir, nelfinavir, ritonavir and saquinavir. Use of protease inhibitors in tritherapy regimens permit more ambitious therapeutic strategies. Reverse transcriptase/ribonuclease H: RT can be inhibited either by nucleoside RT inhibitors (NRTIs) or by non nucleoside RT inhibitors (NNRTIs). NRTIs act as chain terminators, whereas NNRTIs inhibit DNA polymerization by binding a small hydrophobic pocket near the RT active site and inducing an allosteric change in this region. Classical NRTIs are abacavir, adefovir (PMEA), didanosine (ddI), lamivudine (3TC), stavudine (d4T), tenofovir (PMPA), zalcitabine (ddC), and zidovudine (AZT). Classical NNRTIs are atevirdine (BHAP U-87201E), delavirdine, efavirenz (DMP-266), emivirine (I-EBU), and nevirapine (BI-RG-587). The tritherapies used as a basic effective treatment of AIDS associate two NRTIs and one NNRTI. Its function is as follows. Mediates, with Gag polyprotein, the essential events in virion assembly, including binding the plasma membrane, making the protein-protein interactions necessary to create spherical particles, recruiting the viral Env proteins, and packaging the genomic RNA via direct interactions with the RNA packaging sequence (Psi). Gag-Pol polyprotein may regulate its own translation, by the binding genomic RNA in the 5'-UTR. At low concentration, the polyprotein would promote translation, whereas at high concentration, the polyprotein would encapsidate genomic RNA and then shut off translation. In terms of biological role, targets the polyprotein to the plasma membrane via a multipartite membrane-binding signal, that includes its myristoylated N-terminus. Matrix protein is part of the pre-integration complex. Implicated in the release from host cell mediated by Vpu. Binds to RNA. Forms the conical core that encapsulates the genomic RNA-nucleocapsid complex in the virion. Most core are conical, with only 7% tubular. The core is constituted by capsid protein hexamer subunits. The core is disassembled soon after virion entry. Host restriction factors such as TRIM5-alpha or TRIMCyp bind retroviral capsids and cause premature capsid disassembly, leading to blocks in reverse transcription. Capsid restriction by TRIM5 is one of the factors which restricts HIV-1 to the human species. Host PIN1 apparently facilitates the virion uncoating. On the other hand, interactions with PDZD8 or CYPA stabilize the capsid. Functionally, encapsulates and protects viral dimeric unspliced genomic RNA (gRNA). Binds these RNAs through its zinc fingers. Acts as a nucleic acid chaperone which is involved in rearangement of nucleic acid secondary structure during gRNA retrotranscription. Also facilitates template switch leading to recombination. As part of the polyprotein, participates in gRNA dimerization, packaging, tRNA incorporation and virion assembly. Its function is as follows. Aspartyl protease that mediates proteolytic cleavages of Gag and Gag-Pol polyproteins during or shortly after the release of the virion from the plasma membrane. Cleavages take place as an ordered, step-wise cascade to yield mature proteins. This process is called maturation. Displays maximal activity during the budding process just prior to particle release from the cell. Also cleaves Nef and Vif, probably concomitantly with viral structural proteins on maturation of virus particles. Hydrolyzes host EIF4GI and PABP1 in order to shut off the capped cellular mRNA translation. The resulting inhibition of cellular protein synthesis serves to ensure maximal viral gene expression and to evade host immune response. Also mediates cleavage of host YTHDF3. Mediates cleavage of host CARD8, thereby activating the CARD8 inflammasome, leading to the clearance of latent HIV-1 in patient CD4(+) T-cells after viral reactivation; in contrast, HIV-1 can evade CARD8-sensing when its protease remains inactive in infected cells prior to viral budding. In terms of biological role, multifunctional enzyme that converts the viral RNA genome into dsDNA in the cytoplasm, shortly after virus entry into the cell. This enzyme displays a DNA polymerase activity that can copy either DNA or RNA templates, and a ribonuclease H (RNase H) activity that cleaves the RNA strand of RNA-DNA heteroduplexes in a partially processive 3' to 5' endonucleasic mode. Conversion of viral genomic RNA into dsDNA requires many steps. A tRNA(3)-Lys binds to the primer-binding site (PBS) situated at the 5'-end of the viral RNA. RT uses the 3' end of the tRNA primer to perform a short round of RNA-dependent minus-strand DNA synthesis. The reading proceeds through the U5 region and ends after the repeated (R) region which is present at both ends of viral RNA. The portion of the RNA-DNA heteroduplex is digested by the RNase H, resulting in a ssDNA product attached to the tRNA primer. This ssDNA/tRNA hybridizes with the identical R region situated at the 3' end of viral RNA. This template exchange, known as minus-strand DNA strong stop transfer, can be either intra- or intermolecular. RT uses the 3' end of this newly synthesized short ssDNA to perform the RNA-dependent minus-strand DNA synthesis of the whole template. RNase H digests the RNA template except for two polypurine tracts (PPTs) situated at the 5'-end and near the center of the genome. It is not clear if both polymerase and RNase H activities are simultaneous. RNase H probably can proceed both in a polymerase-dependent (RNA cut into small fragments by the same RT performing DNA synthesis) and a polymerase-independent mode (cleavage of remaining RNA fragments by free RTs). Secondly, RT performs DNA-directed plus-strand DNA synthesis using the PPTs that have not been removed by RNase H as primers. PPTs and tRNA primers are then removed by RNase H. The 3' and 5' ssDNA PBS regions hybridize to form a circular dsDNA intermediate. Strand displacement synthesis by RT to the PBS and PPT ends produces a blunt ended, linear dsDNA copy of the viral genome that includes long terminal repeats (LTRs) at both ends. Catalyzes viral DNA integration into the host chromosome, by performing a series of DNA cutting and joining reactions. This enzyme activity takes place after virion entry into a cell and reverse transcription of the RNA genome in dsDNA. The first step in the integration process is 3' processing. This step requires a complex comprising the viral genome, matrix protein, Vpr and integrase. This complex is called the pre-integration complex (PIC). The integrase protein removes 2 nucleotides from each 3' end of the viral DNA, leaving recessed CA OH's at the 3' ends. In the second step, the PIC enters cell nucleus. This process is mediated through integrase and Vpr proteins, and allows the virus to infect a non dividing cell. This ability to enter the nucleus is specific of lentiviruses, other retroviruses cannot and rely on cell division to access cell chromosomes. In the third step, termed strand transfer, the integrase protein joins the previously processed 3' ends to the 5' ends of strands of target cellular DNA at the site of integration. The 5'-ends are produced by integrase-catalyzed staggered cuts, 5 bp apart. A Y-shaped, gapped, recombination intermediate results, with the 5'-ends of the viral DNA strands and the 3' ends of target DNA strands remaining unjoined, flanking a gap of 5 bp. The last step is viral DNA integration into host chromosome. This involves host DNA repair synthesis in which the 5 bp gaps between the unjoined strands are filled in and then ligated. Since this process occurs at both cuts flanking the HIV genome, a 5 bp duplication of host DNA is produced at the ends of HIV-1 integration. Alternatively, Integrase may catalyze the excision of viral DNA just after strand transfer, this is termed disintegration. The polypeptide is Gag-Pol polyprotein (gag-pol) (Homo sapiens (Human)).